Here is a 1770-residue protein sequence, read N- to C-terminus: Transposon Ty2-OR1 Gag-Pol polyprotein (1770 aa).

Composition is skewed to polar residues over residues 1–39 (MESQ…SASN) and 49–60 (KVNSQQETTPGT). Disordered stretches follow at residues 1–88 (MESQ…YQQH) and 359–449 (QHSE…SNDE). Positions 295 to 397 (ENNINVSDRL…SSKPRAAKAH (103 aa)) are RNA-binding. Low complexity predominate over residues 369 to 381 (TSPNTTNTKVTTR). Composition is skewed to polar residues over residues 399 to 408 (IATSSKFSRV) and 415 to 435 (ESTV…GQQQ). D457 functions as the For protease activity; shared with dimeric partner in the catalytic mechanism. Residues 579-636 (NVNKSKSVNKYPYPLIHRMLGHANFRSIQKSLKKNAVTYLKESDIEWSNASTYQCPDC) are integrase-type zinc finger-like. The Integrase catalytic domain maps to 656–831 (ESYEPFQYLH…AGLDITTILP (176 aa)). Mg(2+)-binding residues include D667 and D732. Composition is skewed to polar residues over residues 916–929 (FIEQ…YDQN), 1009–1024 (ESDT…FTAR), and 1065–1082 (QRNS…STPS). Disordered stretches follow at residues 916–935 (FIEQ…SDHD), 1005–1038 (GGTI…MIDL), and 1057–1205 (GGTE…TEIE). The Bipartite nuclear localization signal signature appears at 1193 to 1227 (KKRSLEDNETEIEVSRDTWNNKNMRSLEPPRSKKR). A Reverse transcriptase Ty1/copia-type domain is found at 1353–1491 (NDYYITQLDI…DILGLEIKYQ (139 aa)). The Mg(2+) site is built by D1361, D1442, D1443, D1625, E1667, and D1700. Positions 1625-1767 (DASYGNQPYY…IKTFKLLTNK (143 aa)) constitute an RNase H Ty1/copia-type domain.

In terms of assembly, the capsid protein forms a homotrimer, from which the VLPs are assembled. The protease is a homodimer, whose active site consists of two apposed aspartic acid residues. Initially, virus-like particles (VLPs) are composed of the structural unprocessed proteins Gag and Gag-Pol, and also contain the host initiator methionine tRNA (tRNA(i)-Met) which serves as a primer for minus-strand DNA synthesis, and a dimer of genomic Ty RNA. Processing of the polyproteins occurs within the particle and proceeds by an ordered pathway, called maturation. First, the protease (PR) is released by autocatalytic cleavage of the Gag-Pol polyprotein, and this cleavage is a prerequisite for subsequent processing at the remaining sites to release the mature structural and catalytic proteins. Maturation takes place prior to the RT reaction and is required to produce transposition-competent VLPs.

Its subcellular location is the cytoplasm. It is found in the nucleus. It carries out the reaction DNA(n) + a 2'-deoxyribonucleoside 5'-triphosphate = DNA(n+1) + diphosphate. The enzyme catalyses Endonucleolytic cleavage to 5'-phosphomonoester.. Functionally, capsid protein (CA) is the structural component of the virus-like particle (VLP), forming the shell that encapsulates the retrotransposons dimeric RNA genome. The particles are assembled from trimer-clustered units and there are holes in the capsid shells that allow for the diffusion of macromolecules. CA also has nucleocapsid-like chaperone activity, promoting primer tRNA(i)-Met annealing to the multipartite primer-binding site (PBS), dimerization of Ty2 RNA and initiation of reverse transcription. Its function is as follows. The aspartyl protease (PR) mediates the proteolytic cleavages of the Gag and Gag-Pol polyproteins after assembly of the VLP. In terms of biological role, reverse transcriptase/ribonuclease H (RT) is a multifunctional enzyme that catalyzes the conversion of the retro-elements RNA genome into dsDNA within the VLP. The enzyme displays a DNA polymerase activity that can copy either DNA or RNA templates, and a ribonuclease H (RNase H) activity that cleaves the RNA strand of RNA-DNA heteroduplexes during plus-strand synthesis and hydrolyzes RNA primers. The conversion leads to a linear dsDNA copy of the retrotransposon that includes long terminal repeats (LTRs) at both ends. Integrase (IN) targets the VLP to the nucleus, where a subparticle preintegration complex (PIC) containing at least integrase and the newly synthesized dsDNA copy of the retrotransposon must transit the nuclear membrane. Once in the nucleus, integrase performs the integration of the dsDNA into the host genome. In Saccharomyces cerevisiae (strain ATCC 204508 / S288c) (Baker's yeast), this protein is Transposon Ty2-OR1 Gag-Pol polyprotein (TY2B-OR1).